Consider the following 201-residue polypeptide: Small ribosomal subunit protein uS4c (201 aa).

One can recognise an S4 RNA-binding domain in the interval 89-150 (MRLDNIVFRL…RQKSQAIITK (62 aa)).

This sequence belongs to the universal ribosomal protein uS4 family. In terms of assembly, part of the 30S ribosomal subunit. Contacts protein S5. The interaction surface between S4 and S5 is involved in control of translational fidelity.

Its subcellular location is the plastid. It localises to the chloroplast. Its function is as follows. One of the primary rRNA binding proteins, it binds directly to 16S rRNA where it nucleates assembly of the body of the 30S subunit. With S5 and S12 plays an important role in translational accuracy. In Funaria hygrometrica (Moss), this protein is Small ribosomal subunit protein uS4c (rps4).